The following is a 122-amino-acid chain: Small ribosomal subunit protein uS12 (122 aa).

It belongs to the universal ribosomal protein uS12 family. Part of the 30S ribosomal subunit. Contacts proteins S8 and S17. May interact with IF1 in the 30S initiation complex.

With S4 and S5 plays an important role in translational accuracy. Its function is as follows. Interacts with and stabilizes bases of the 16S rRNA that are involved in tRNA selection in the A site and with the mRNA backbone. Located at the interface of the 30S and 50S subunits, it traverses the body of the 30S subunit contacting proteins on the other side and probably holding the rRNA structure together. The combined cluster of proteins S8, S12 and S17 appears to hold together the shoulder and platform of the 30S subunit. The sequence is that of Small ribosomal subunit protein uS12 from Corynebacterium efficiens (strain DSM 44549 / YS-314 / AJ 12310 / JCM 11189 / NBRC 100395).